The primary structure comprises 410 residues: Multifunctional CCA protein (410 aa).

ATP-binding residues include Gly8 and Arg11. 2 residues coordinate CTP: Gly8 and Arg11. The Mg(2+) site is built by Asp21 and Asp23. ATP is bound by residues Arg91, Arg138, and Arg141. The CTP site is built by Arg91, Arg138, and Arg141. One can recognise an HD domain in the interval 229-347 (TGVHQEMVSD…AQLALVCEAD (119 aa)).

It belongs to the tRNA nucleotidyltransferase/poly(A) polymerase family. Bacterial CCA-adding enzyme type 1 subfamily. Monomer. Can also form homodimers and oligomers. Requires Mg(2+) as cofactor. Ni(2+) serves as cofactor.

It carries out the reaction a tRNA precursor + 2 CTP + ATP = a tRNA with a 3' CCA end + 3 diphosphate. It catalyses the reaction a tRNA with a 3' CCA end + 2 CTP + ATP = a tRNA with a 3' CCACCA end + 3 diphosphate. Functionally, catalyzes the addition and repair of the essential 3'-terminal CCA sequence in tRNAs without using a nucleic acid template. Adds these three nucleotides in the order of C, C, and A to the tRNA nucleotide-73, using CTP and ATP as substrates and producing inorganic pyrophosphate. tRNA 3'-terminal CCA addition is required both for tRNA processing and repair. Also involved in tRNA surveillance by mediating tandem CCA addition to generate a CCACCA at the 3' terminus of unstable tRNAs. While stable tRNAs receive only 3'-terminal CCA, unstable tRNAs are marked with CCACCA and rapidly degraded. The chain is Multifunctional CCA protein from Xanthomonas campestris pv. campestris (strain B100).